The sequence spans 537 residues: Small conductance calcium-activated potassium channel protein 1 (537 aa).

The span at 1–10 (MSSHSHNGSV) shows a compositional bias: polar residues. The interval 1 to 90 (MSSHSHNGSV…GKPPTVSHRL (90 aa)) is disordered. Positions 65-76 (QEEEEEEEEEED) are enriched in acidic residues. The helical transmembrane segment at 108 to 128 (LIFGMFGIVVMVTETELSWGV) threads the bilayer. Residues 137–157 (FALKCLISLSTVILLGLVILY) traverse the membrane as a helical segment. A helical membrane pass occupies residues 176-196 (IAMTWERVSLISLELVVCAIH). A helical transmembrane segment spans residues 225 to 245 (VLLSIPMFLRLYLLARVMLLH). The helical transmembrane segment at 274-294 (LMTICPGTVLLVFSVSSWIVA) threads the bilayer. Positions 314 to 334 (FLGAMWLISITFLSIGYGDMV) form an intramembrane region, pore-forming. Positions 343-363 (VCLLTGIMGAGCTALVVAVVA) are segment S6. The tract at residues 381–460 (DTQLTKRVKN…LAELAKAQSI (80 aa)) is calmodulin-binding.

The protein belongs to the potassium channel KCNN family. KCa2.1/KCNN1 subfamily. As to quaternary structure, homodimer. Heteromultimer with KCNN2 and KCNN3. The complex is composed of 4 channel subunits each of which binds to a calmodulin subunit which regulates the channel activity through calcium-binding. Interacts with calmodulin. Highest expression in brain and liver with lower levels in heart, testis, kidney and colon. In colon, detected in smooth muscle cells. Expressed in atrial and ventricular myocytes with higher levels in atrial myocytes.

The protein resides in the membrane. It localises to the cytoplasm. It is found in the myofibril. Its subcellular location is the sarcomere. The protein localises to the z line. It carries out the reaction K(+)(in) = K(+)(out). Inhibited by bee venom neurotoxin apamin. Inhibited by d-tubocurarine and tetraethylammonium (TEA). Its function is as follows. Small conductance calcium-activated potassium channel that mediates the voltage-independent transmembrane transfer of potassium across the cell membrane through a constitutive interaction with calmodulin which binds the intracellular calcium allowing its opening. The current is characterized by a voltage-independent activation, an intracellular calcium concentration increase-dependent activation and a single-channel conductance of about 3 picosiemens. Also presents an inwardly rectifying current, thus reducing its already small outward conductance of potassium ions, which is particularly the case when the membrane potential displays positive values, above + 20 mV. Activation is followed by membrane hyperpolarization. Thought to regulate neuronal excitability by contributing to the slow component of synaptic afterhyperpolarization. In Mus musculus (Mouse), this protein is Small conductance calcium-activated potassium channel protein 1.